The primary structure comprises 426 residues: MAAIEAVNAREILDSRGNPTVEVEVLLEDGTFTRAAVPSGASTGAFEAYELRDGDAGRYLGKGVQKAVAAVVDEIGPAIQDLDAADQRIIDATMIELDGTENKSRLGANALLGVSLAVAKAAADSAELPLYRYLGGPNAHTLPVPMLNVINGGSHADTNVDIQEFMLLPVGASTFSEGLRWGVETYHALKSLLKKKGLSTGLGDEGGFAPNLDSNRAALDLLMEAIDAAGFTAGKQIALGLDVASSEFYSDGAYTFEGQKVDAAHLTAYFADLVASYPLITIEDPLDEDDWAGYDHFTAELGAKVQIVGDDLFVTNPKRLADGITRGVANSILVKVNQIGTLTETLDAVSLAQRSGYTTVLSHRSGETEDTTIADLAVAVDAGQIKTGAPARSERVAKYNQLLRIEQDLGAAAVYAGRSAFPRFQA.

A (2R)-2-phosphoglycerate-binding site is contributed by Gln163. Catalysis depends on Glu205, which acts as the Proton donor. Residues Asp242, Glu283, and Asp310 each coordinate Mg(2+). (2R)-2-phosphoglycerate-binding residues include Lys335, Arg364, Ser365, and Lys386. Catalysis depends on Lys335, which acts as the Proton acceptor.

This sequence belongs to the enolase family. Mg(2+) serves as cofactor.

Its subcellular location is the cytoplasm. It localises to the secreted. It is found in the cell surface. The enzyme catalyses (2R)-2-phosphoglycerate = phosphoenolpyruvate + H2O. It functions in the pathway carbohydrate degradation; glycolysis; pyruvate from D-glyceraldehyde 3-phosphate: step 4/5. In terms of biological role, catalyzes the reversible conversion of 2-phosphoglycerate (2-PG) into phosphoenolpyruvate (PEP). It is essential for the degradation of carbohydrates via glycolysis. This Clavibacter michiganensis subsp. michiganensis (strain NCPPB 382) protein is Enolase.